The sequence spans 2219 residues: MEEDIACVKDLVSKYLADNERLSRQKLAFLVQTEPRMLLMEGLKLLSLCIEIDSCNANGCEHNSEDKSVERILHDHGILTPSLCFVVPDGYKLTGNVLILLECFVRSSPANFEQKYIEDFKKLEQLKEDLKTVNISLIPLIDGRTSFYNEQIPDWVNDKLRDTLFSLLRYAQESNSLFEESEYSRLCESLSMTSGRLSGVESLNVLLDNRSNHYEEVIASCHQGINNKLTAHEVKLQIEEEYQVFRNRLRKGEIESQFLKVEKSRLLNEFNDLYMDKVSTTEDDVEYLIHQFKRASPILRFLYANVGKEANEKSDQTIKECQMQYWRSFLNKVKSLRILNTRRKLLLIFDVLILLASKYDQMKYKSLRGWLGSCFISVNDRLVSLESTKRDLKKWVERRQQAEMSKTMQSSQCSNKNQILNSMLQKTILKATTALKDVGISVDQYKVDMEIMCPNCYDSVMDFDVSGITPTISYQRSEEEKFPYIMGSVELLETVDLERLSSLSLALVNSMKTSSTVKLRQNEFGPARYQVVRCREAYCQEFSLGDTEFQLVYQKTGECSKCYAINDNRVGEICSFYADPKRYFPAIFSAEVLQATVGTMISWIEDCSELEGQLHNIRSLTKMILVLILTHPSKRSQKLLQNLRYFIMAYVSDFYHKDLIDKIREELITDTEFLLYRLVRALMGLILSENVKSMMTNRFKFILNISYMCHFITKETPDRLTDQIKCFEKFLEPKVKFGHVSINPADIATEEELDDMIYNAKKFLNKDGCTSAKGPDYKRPGVSKKFLSLLTSSFNNGSLFKEKEVKKDIKDPLITSGCATALDLASNKSVVVNKYTDGSRVLNYDFNKLTALAVSQLTEVFSRKGKHLLNKQDYEYKVQQAMSNLVLGSRQHKTDADEADLDEILLDGGASVYFDQLRETVEKIVDQYREPVKPGSGPDDDGQPSVNDLDEVISNKFHIRLIKGELSNHMVEDFDHDVLPDKFYKEFCDAVYENDKLKERYFYCGHMSQCPIGELTKAVTTRTYFDHEYFQCFKSILLKMNANTLMGRYTHYKSRNLNFKFDMGKLSDDVRISERESNSEALSKALSLTNCTTAMLKNLCFYSQESPQSYNSVGPDTGRLKFSLSYKEQVGGNRELYIGDLRTKMFTRLIEDYFEALSLQLSGSCLNNEKEFENAILSMKLNVSLAHVSYSMDHSKWGPMMCPFLFLAVLQNLIFLSKDLQADIKGRDYLSTLLMWHMHKMVEIPFNVVSAMMKSFIKAQLGLRKKTTQSITEDFFYSSFQVGVVPSHVSSILDMGQGILHNTSDFYALISERFINYAISCICGGVVDAYTSSDDQISLFDQTLTELLQRDPDEFKTLMDFHYYMSDQLNKFVSPKSVIGRFVAEFKSRFFVWGDEVPLLTKFVAAALHNIKCKEPHQLAETIDTIIDQSVANGVPVHLCNLIQMRTLSLLQYARYPIDPFLLNCETDVRDWVDGNRSYRIMRQIEGLIPDACSKIRSMLRKLYNRLKTGQLHEEFTTNYLSSEHLSSLRNLCELLGVEPPSESDLEFSWLNLAAHHPLRMVLRQKIIYSGAVNLDDEKVPTIVKTIQNKLSSTFTRGAQKLLSEAINKSAFQSSIASGFVGLCRTLGSKCVRGPNKENLYIKSIQSLISGTQGIELLTNSYGVQYWRVPLNLRSENESVVSYFRPLLWDYMCISLSTAIELGAWVLGEPKMTKALEFFKHNPCDYFPLKPTASKLLEDRIGLNHIIHSLRRLYPSVFEKHILPFMSDLASTKMKWSPRIKFLDLCVALDVSCEALSLVSHIVKWKREEHYIVLSSELRLSHTRTHEPMVEERVVSTSDAVDNFMRQIYFESYVRPFVATTRTLGSFTWFPHKTSIPEGEGLQRLGPFSSFVEKVIHKGVERPMFKHDLMMGYAWIDFDIEPARLNQNQLIASGLVSTKFDSLEDFFDAVASLPSGSTRLSQTVRFRIKSQDASFKETFAIHLDYTGSMNQQTKYLVHDVTVMYSGAVNPCVLLDCWRLVMSGSTFKGKSAWYVDTEVINEFLIDTNQLGHVTPVEIVVDAEKLQFTEYDFVLVGPCTEPAPLVVHKGGLWECGKKLASFTPVIQDQDLEMFVKEVGDTSSDLLTEALSAMMLDRLGLKMQWSGVDIVSTLKAAVPQSMEILGAVLEAVDNWVEFKGYALCYSKSRRRIMVQSSGGKLRLKGRTCEELIERDEHIEDIE.

Residues 26 to 289 (KLAFLVQTEP…TTEDDVEYLI (264 aa)) are endonuclease. The Mn(2+) site is built by Glu-51, Asp-89, and Glu-102. Lys-115 is a catalytic residue. A RdRp catalytic domain is found at 1177–1373 (LSMKLNVSLA…YMSDQLNKFV (197 aa)). Asp-1335 contacts Mg(2+).

It belongs to the Bunyavirales RNA polymerase family. Homomultimer; the oligomeric structure is essential for the polymerase activity. Interacts with nucleoprotein N. Interacts with protein Z; this interaction inhibits viral transcription and replication, Z partially blocks the product exit tunnel for the releasing nascent RNA product. Mn(2+) is required as a cofactor. The cofactor is Mg(2+).

It localises to the virion. Its subcellular location is the host cytoplasm. It carries out the reaction RNA(n) + a ribonucleoside 5'-triphosphate = RNA(n+1) + diphosphate. RNA-dependent RNA polymerase, which is responsible for the replication and transcription of the viral RNA genome using antigenomic RNA as an intermediate. During transcription, synthesizes subgenomic RNAs and assures their capping by a cap-snatching mechanism, which involves the endonuclease activity cleaving the host capped pre-mRNAs. These short capped RNAs are then used as primers for viral transcription. The 3'-end of subgenomic mRNAs molecules are heterogeneous and not polyadenylated. The replicase function is to direct synthesis of antigenomic and genomic RNA which are encapsidated and non capped. As a consequence of the use of the same enzyme for both transcription and replication, these mechanisms need to be well coordinated. These processes may be regulated by proteins N and Z in a dose-dependent manner. Z protein inhibits the viral polymerase L und thus the viral transcription and RNA synthesis. The polypeptide is RNA-directed RNA polymerase L (Homo sapiens (Human)).